The sequence spans 447 residues: Putative branched-chain amino acid carrier protein SAB1263c (447 aa).

The next 12 membrane-spanning stretches (helical) occupy residues 6 to 26 (WVIGFTLFAMFFGAGNLIFPP), 40 to 60 (ILAFVLTGIDLPLLGVIVGAL), 74 to 94 (PKFSILFLIIIYLTIGPLFAI), 114 to 134 (SSIALFIFTIIYFIVVLYICL), 143 to 163 (IGSLLTPLLLITILAMIIKGY), 193 to 213 (GYLTMDAIAAIAFSMIVVNAV), 229 to 249 (LTAGLIAAVALIFIYISLGYI), 290 to 310 (LLGIIVALACLTTACGLIGAV), 326 to 346 (FVLVFILMSFIIANQGLNAVI), 350 to 370 (IPVLSIVYPVAITVVLLILIA), 382 to 402 (IPVIIVFILSIFSVISKLGWL), and 417 to 437 (LEWFPVAIIATILGYLVGIFV).

The protein belongs to the branched chain amino acid transporter family.

It is found in the cell membrane. Functionally, component of the transport system for branched-chain amino acids (leucine, isoleucine and valine), which is coupled to a proton motive force (Potential). Contributes to NaCl tolerance. The sequence is that of Putative branched-chain amino acid carrier protein SAB1263c from Staphylococcus aureus (strain bovine RF122 / ET3-1).